A 137-amino-acid polypeptide reads, in one-letter code: Putative pre-16S rRNA nuclease (137 aa).

The protein belongs to the YqgF nuclease family.

The protein localises to the cytoplasm. Functionally, could be a nuclease involved in processing of the 5'-end of pre-16S rRNA. This Bacillus cereus (strain G9842) protein is Putative pre-16S rRNA nuclease.